Here is a 284-residue protein sequence, read N- to C-terminus: L-ribulose-5-phosphate 3-epimerase UlaE (284 aa).

It belongs to the L-ribulose-5-phosphate 3-epimerase family.

It catalyses the reaction L-ribulose 5-phosphate = L-xylulose 5-phosphate. The protein operates within cofactor degradation; L-ascorbate degradation; D-xylulose 5-phosphate from L-ascorbate: step 3/4. In terms of biological role, catalyzes the isomerization of L-xylulose-5-phosphate to L-ribulose-5-phosphate. Is involved in the anaerobic L-ascorbate utilization. The polypeptide is L-ribulose-5-phosphate 3-epimerase UlaE (Escherichia coli O139:H28 (strain E24377A / ETEC)).